A 174-amino-acid polypeptide reads, in one-letter code: 16S rRNA aminocarboxypropyltransferase (174 aa).

Threonine 26, leucine 73, leucine 97, and serine 116 together coordinate S-adenosyl-L-methionine.

The protein belongs to the TDD superfamily. TSR3 family.

The protein resides in the cytoplasm. The catalysed reaction is an N(1)-methylpseudouridine in rRNA + S-adenosyl-L-methionine = N(1)-methyl-N(3)-[(3S)-3-amino-3-carboxypropyl]pseudouridine in rRNA + S-methyl-5'-thioadenosine + H(+). Aminocarboxypropyltransferase that catalyzes the aminocarboxypropyl transfer on pseudouridine corresponding to position 914 in M.jannaschii 16S rRNA. It constitutes the last step in biosynthesis of the hypermodified N1-methyl-N3-(3-amino-3-carboxypropyl) pseudouridine (m1acp3-Psi). In Methanosarcina acetivorans (strain ATCC 35395 / DSM 2834 / JCM 12185 / C2A), this protein is 16S rRNA aminocarboxypropyltransferase.